The sequence spans 182 residues: Putative CTD phosphatase-like protein 355R (182 aa).

One can recognise an FCP1 homology domain in the interval 1–180 (MKNIFLDLDN…MRLKDVLNRH (180 aa)).

It belongs to the IIV-6 355R family.

May function as a phosphatase. The chain is Putative CTD phosphatase-like protein 355R from Invertebrate iridescent virus 6 (IIV-6).